The chain runs to 890 residues: MNSGTPPPSPSGPPPPPAPQPQARARLNATASLEQDKIEPPRAPRPQADPSAGRSAGEAAAPEPRAPQTGSREETDRAGPMKADVEIPFEEVLEKAKAGDPKAQTEVGKHYLRLANDADEELNSCSAVAWLILAAKQGRREAVKLLRRCLADRKGITSENEAEVKQLSSETDLERAVRKAALVMYWKLNPKKKKQVAVSELLENVGQVNEQDGGAQPGPVPKSLQKQRRMLERLVSSESKNYIALDDFVELTKKYAKGIIPTNLFLQDEDEDEDELAGKSPEDLPLRQKVVKYPLHAIMEIKEYLIDVASKAGMHWLSTIVPTHHINALIFFFIISNLTIDFFAFFIPLVVFYLSFVSMVICTLKVFQDSKAWENFRTLTDLLLRFEPNLDVEQAEVNFGWNHLEPYIHFLLSVVFVIFSFPLASKDCIPCSELAVISTFFTVTSYMSLSSSAEPYTRRALVTEVAAGLLSLLPTVPVDWRFLKVLGQTFFTVPVGHFIILNVSLPCLLYVYLFYLFFRMAQLRNFKGTYCYLVPYLVCFMWCELSVVILLQSTGLGLVRASIGYFLFLFALPILVAGLALMGTVQFARWFLSLDLTKIMVTTVICGVPLLFRWWTKANFSVMGMVKSLTKSSMVKLILVWLTAILLFCWFYVYRSEGMKVYNSTLTWQQYGFLCGPRAWKETNMARTQILCSHLEGHRVTWTGRFKYVRVTEIDNSAESAINMLPFFLGDWMRCLYGEAYPSCSSGNTSTAEEELCRLKQLAKHPCHIKKFDRYKFEITVGMPFGTNGNRGHEEDDITKDIVLRASSEFKDVLLNLRQGSLIEFSTILEGRLGSKWPVFELKAISCLNCMTQLSPARRHVKIEQDWRSTVHGALKFAFDFFFFPFLSAA.

Met-1 is modified (N-acetylmethionine). Over residues 1–20 the composition is skewed to pro residues; sequence MNSGTPPPSPSGPPPPPAPQ. Positions 1–83 are disordered; that stretch reads MNSGTPPPSP…ETDRAGPMKA (83 aa). The interval 1-323 is interaction with ATP6V1A; it reads MNSGTPPPSP…MHWLSTIVPT (323 aa). Phosphothreonine is present on Thr-30. The residue at position 32 (Ser-32) is a Phosphoserine. Residues 50-67 are compositionally biased toward low complexity; it reads PSAGRSAGEAAAPEPRAP. Residues 71–83 are compositionally biased toward basic and acidic residues; that stretch reads SREETDRAGPMKA. A Phosphoserine modification is found at Ser-158. The disordered stretch occupies residues 208-227; that stretch reads VNEQDGGAQPGPVPKSLQKQ. A run of 10 helical transmembrane segments spans residues 314–334, 340–360, 402–422, 427–447, 465–485, 496–516, 529–549, 563–583, 589–609, and 632–652; these read MHWL…FFFI, IDFF…VSMV, NHLE…FSFP, DCIP…TSYM, VAAG…FLKV, GHFI…LFYL, TYCY…SVVI, IGYF…ALMG, RWFL…CGVP, and SSMV…CWFY. Residues 653–869 are Lumenal-facing; the sequence is VYRSEGMKVY…HVKIEQDWRS (217 aa). Residues Asn-663 and Asn-748 are each glycosylated (N-linked (GlcNAc...) asparagine). A helical membrane pass occupies residues 870–890; the sequence is TVHGALKFAFDFFFFPFLSAA.

As to quaternary structure, interacts with ATP6V1A. In terms of tissue distribution, highly expressed in the developing lens.

Its subcellular location is the endoplasmic reticulum membrane. It is found in the cytoplasmic vesicle. The protein resides in the secretory vesicle. Its function is as follows. Participates in the regulation of cellular Ca(2+) homeostasis, at least partly, by modulating the filling state of the endoplasmic reticulum Ca(2+) store. Negatively regulates the ER stress response and positively regulates the stability of V-ATPase subunits ATP6V1A and ATP1B1 by preventing their degradation through an unknown proteasome-independent mechanism. The chain is Wolframin (Wfs1) from Mus musculus (Mouse).